A 129-amino-acid chain; its full sequence is uncharacterized protein (129 aa).

The segment at 1 to 129 (MGRMASPLRS…PARQSARMAR (129 aa)) is disordered. The span at 18–46 (ESTRHKETSTVRVETSSHREETSSHRVET) shows a compositional bias: basic and acidic residues. Residues 47-59 (SSRQVRTSSRQVE) are compositionally biased toward low complexity. Positions 70 to 97 (LTPSTKRLPQFLEVSSQHVETSSQCTET) are enriched in polar residues.

This is an uncharacterized protein from Mus musculus (Mouse).